A 179-amino-acid polypeptide reads, in one-letter code: Trypsin inhibitor (179 aa).

Pyrrolidone carboxylic acid is present on Q1. 2 cysteine pairs are disulfide-bonded: C40–C85 and C132–C143.

Belongs to the protease inhibitor I3 (leguminous Kunitz-type inhibitor) family. As to quaternary structure, heterodimer of an alpha and a beta chain linked by a disulfide bond. In terms of tissue distribution, abundant in dry seeds.

Its subcellular location is the secreted. In terms of biological role, inhibits trypsin, plasmin, human plasma kallikrein, chymotrypsin and factor XIIa activity. In Leucaena leucocephala (White popinac), this protein is Trypsin inhibitor.